Consider the following 352-residue polypeptide: Dolichol-phosphate mannosyltransferase (352 aa).

Residues Met1 to Gly229 are Cytoplasmic-facing. 14 residues coordinate GDP-alpha-D-mannose: Pro8, Tyr10, Glu12, Val37, Asp39, Asp89, Ala90, Asp91, Gln93, Arg117, Val156, Lys178, Arg202, and Lys208. Mg(2+)-binding residues include Asp91 and Gln93. Mn(2+) contacts are provided by Asp91 and Gln93. A helical membrane pass occupies residues Glu230 to Val256. The Extracellular portion of the chain corresponds to Asn257–Pro261. Residues Lys262–Phe286 traverse the membrane as a helical segment. The Cytoplasmic portion of the chain corresponds to Lys287–Ser293. The chain crosses the membrane as a helical span at residues Ile294–Leu320. At Phe321–His325 the chain is on the extracellular side. The chain crosses the membrane as a helical span at residues Tyr326 to Trp350. The Cytoplasmic portion of the chain corresponds to Ala351–Thr352.

The protein belongs to the glycosyltransferase 2 family. It depends on Mg(2+) as a cofactor. Mn(2+) serves as cofactor. Requires Ca(2+) as cofactor.

The protein resides in the cell membrane. It carries out the reaction a di-trans,poly-cis-dolichyl phosphate + GDP-alpha-D-mannose = a di-trans,poly-cis-dolichyl beta-D-mannosyl phosphate + GDP. It functions in the pathway protein modification; protein glycosylation. Transfers mannose from GDP-mannose to dolichol monophosphate to form dolichol phosphate mannose (Dol-P-Man) which is the mannosyl donor in pathways leading to N-glycosylation, glycosyl phosphatidylinositol membrane anchoring, and O-mannosylation of proteins. The protein is Dolichol-phosphate mannosyltransferase of Pyrococcus furiosus (strain ATCC 43587 / DSM 3638 / JCM 8422 / Vc1).